We begin with the raw amino-acid sequence, 184 residues long: Photosystem I assembly protein Ycf4 (184 aa).

2 helical membrane-spanning segments follow: residues Phe-22–Ser-42 and Ile-57–Ser-77.

Belongs to the Ycf4 family.

The protein resides in the plastid. It is found in the chloroplast thylakoid membrane. Seems to be required for the assembly of the photosystem I complex. The chain is Photosystem I assembly protein Ycf4 from Lepidium virginicum (Virginia pepperweed).